The following is a 179-amino-acid chain: Large ribosomal subunit protein uL6 (179 aa).

It belongs to the universal ribosomal protein uL6 family. In terms of assembly, part of the 50S ribosomal subunit.

This protein binds to the 23S rRNA, and is important in its secondary structure. It is located near the subunit interface in the base of the L7/L12 stalk, and near the tRNA binding site of the peptidyltransferase center. This Acidothermus cellulolyticus (strain ATCC 43068 / DSM 8971 / 11B) protein is Large ribosomal subunit protein uL6.